The primary structure comprises 369 residues: F-box protein At3g08750 (369 aa).

Residues 6 to 53 enclose the F-box domain; the sequence is CLLLPSLPFELIEEILYKIPAESLIRFKSTCKKWYNLITEKRFMYNHL.

This Arabidopsis thaliana (Mouse-ear cress) protein is F-box protein At3g08750.